The sequence spans 333 residues: Fructose-1,6-bisphosphatase class 1 (333 aa).

Residues E92, D113, L115, and D116 each coordinate Mg(2+). Residues D116–S119, N209, Y242, and K272 each bind substrate. E278 is a binding site for Mg(2+).

Belongs to the FBPase class 1 family. In terms of assembly, homotetramer. Requires Mg(2+) as cofactor.

It is found in the cytoplasm. The catalysed reaction is beta-D-fructose 1,6-bisphosphate + H2O = beta-D-fructose 6-phosphate + phosphate. The protein operates within carbohydrate biosynthesis; Calvin cycle. The chain is Fructose-1,6-bisphosphatase class 1 from Chlorobium phaeovibrioides (strain DSM 265 / 1930) (Prosthecochloris vibrioformis (strain DSM 265)).